Consider the following 605-residue polypeptide: MVKDRVIELFRQALAKGAAEGRWPALEASFSVEAPRDPKHGDFAVNAAMVLAKAAGKPPRDLAQAIAAEVRAVDAQHEIAGLEVAGPGFINVRLAPDVWLRALGRVVAEGTAYGRTEVGRGKKVIVEYVSANPTGPMHVGHGRNAVVGDGVQSLLRWAGFEVTREYYVNDYGAQVQTLARSVHLRYQELFGRQVTMPPKSYPGEYVKDVAAALKAEHGDRWLDAPEAEWLALFRDRAVEHVLGLIREDLRAVNIEFDRWYSEKALYESGTVDRFLRFLAEKDLVYVGKLPPPKSKKGQPAPAQAASNSAHDLGEEGIAASDDLTLFRSSQYGDEVDRPVKKADGTTTYFCADIAYHWDKRQRADALVDVLGADHGGYVPRLEAALEALGASRKDLHVVLIQMVNLTRGGEAVKMSKRAGTVVSLREVVDEVGRDATRFIFLTRRSDAQLDFDIELAKRQTLDNPVFYVQYGHARLAQIFAKAREAGAPVPEFDLEAARTLTSAEEQDLIRRIVAFPDMLAAAALAYEPHRVAFYLQETIAAFHSYYTQGKRTGERVISADARKTAGRLFLCRALKQVLANGLGLLGVAAPERMESPETRDLADDV.

The 'HIGH' region signature appears at 131–141; sequence ANPTGPMHVGH. The interval 290–309 is disordered; it reads PPPKSKKGQPAPAQAASNSA. The segment covering 298 to 309 has biased composition (low complexity); sequence QPAPAQAASNSA.

Belongs to the class-I aminoacyl-tRNA synthetase family. In terms of assembly, monomer.

Its subcellular location is the cytoplasm. It carries out the reaction tRNA(Arg) + L-arginine + ATP = L-arginyl-tRNA(Arg) + AMP + diphosphate. The protein is Arginine--tRNA ligase of Anaeromyxobacter sp. (strain Fw109-5).